A 259-amino-acid polypeptide reads, in one-letter code: Protein unc-50 homolog (259 aa).

Met-1 carries the N-acetylmethionine modification. A compositionally biased stretch (polar residues) spans 1-17; sequence MLPSTSVNSPAQGNGVL. The disordered stretch occupies residues 1 to 22; it reads MLPSTSVNSPAQGNGVLSSRDA. The Cytoplasmic portion of the chain corresponds to 1-82; it reads MLPSTSVNSP…TKDQWARDDP (82 aa). A Phosphoserine modification is found at Ser-6. The chain crosses the membrane as a helical span at residues 83-103; it reads AFLVLLSIWLCVSTIGFGFVL. Residues 104–115 are Lumenal-facing; it reads DMGFFETIKLLL. The chain crosses the membrane as a helical span at residues 116–136; it reads WVVFIDCVGVGLLISTLMWFI. The Cytoplasmic portion of the chain corresponds to 137–163; that stretch reads SNKYLVKRQSRDYDVEWGYAFDVHLNA. Residues 164 to 184 traverse the membrane as a helical segment; sequence FYPLLVILHFIQLFFINHVIL. The Lumenal segment spans residues 185 to 187; that stretch reads TDT. Residues 188–208 traverse the membrane as a helical segment; that stretch reads FIGYLVGNTLWLVAVGYYIYV. Over 209–222 the chain is Cytoplasmic; it reads TFLGYSALPFLKNT. The helical transmembrane segment at 223–243 threads the bilayer; sequence VILLYPFAPLILLYGLSLALG. Residues 244–259 lie on the Lumenal side of the membrane; the sequence is WNFTHTLCSFYKYRVK.

The protein belongs to the unc-50 family.

It localises to the nucleus inner membrane. The protein resides in the golgi apparatus membrane. Involved in the cell surface expression of neuronal nicotinic receptors. Binds RNA. The polypeptide is Protein unc-50 homolog (UNC50) (Bos taurus (Bovine)).